The primary structure comprises 303 residues: Bifunctional protein FolD (303 aa).

Residues 175 to 177 (GVS) and Ile-243 contribute to the NADP(+) site.

It belongs to the tetrahydrofolate dehydrogenase/cyclohydrolase family. As to quaternary structure, homodimer.

It catalyses the reaction (6R)-5,10-methylene-5,6,7,8-tetrahydrofolate + NADP(+) = (6R)-5,10-methenyltetrahydrofolate + NADPH. It carries out the reaction (6R)-5,10-methenyltetrahydrofolate + H2O = (6R)-10-formyltetrahydrofolate + H(+). It participates in one-carbon metabolism; tetrahydrofolate interconversion. Its function is as follows. Catalyzes the oxidation of 5,10-methylenetetrahydrofolate to 5,10-methenyltetrahydrofolate and then the hydrolysis of 5,10-methenyltetrahydrofolate to 10-formyltetrahydrofolate. The sequence is that of Bifunctional protein FolD from Xanthomonas euvesicatoria pv. vesicatoria (strain 85-10) (Xanthomonas campestris pv. vesicatoria).